We begin with the raw amino-acid sequence, 273 residues long: Octanoyl-[GcvH]:protein N-octanoyltransferase (273 aa).

A BPL/LPL catalytic domain is found at 40-245 (ATEGAAIRSW…SLMELGATLT (206 aa)). Residue C144 is the Acyl-thioester intermediate of the active site.

The protein belongs to the octanoyltransferase LipL family.

The catalysed reaction is N(6)-octanoyl-L-lysyl-[glycine-cleavage complex H protein] + L-lysyl-[lipoyl-carrier protein] = N(6)-octanoyl-L-lysyl-[lipoyl-carrier protein] + L-lysyl-[glycine-cleavage complex H protein]. It participates in protein modification; protein lipoylation via endogenous pathway; protein N(6)-(lipoyl)lysine from octanoyl-[acyl-carrier-protein]. Catalyzes the amidotransfer (transamidation) of the octanoyl moiety from octanoyl-GcvH to the lipoyl domain of the E2 subunit of lipoate-dependent enzymes. The protein is Octanoyl-[GcvH]:protein N-octanoyltransferase of Exiguobacterium sibiricum (strain DSM 17290 / CCUG 55495 / CIP 109462 / JCM 13490 / 255-15).